The following is a 359-amino-acid chain: Outer membrane protein A (359 aa).

A signal peptide spans 1-21; sequence MKKTAIALAVALAGFATVAQA. 8 beta stranded membrane-spanning segments follow: residues 27–37, 62–73, 77–85, 103–114, 119–127, 154–163, 168–175, and 194–202; these read TWYTGAKLGWS, QLGAGAFLGYQA, LGFELGYDW, QGVQLAAKLSYP, LDIYTRLGG, PLAAVGVEYA, WATRLDYQ, and MLSLGVSYR. Repeat copies occupy residues 210–211, 212–213, 214–215, 216–217, and 218–219. Positions 210 to 219 are 5 X 2 AA tandem repeats of A-P; the sequence is APAPAPAPAP. Residues 221–351 form the OmpA-like domain; the sequence is VETKRFTLKS…RVEIEVKGIK (131 aa). An intrachain disulfide couples Cys-322 to Cys-336.

It belongs to the outer membrane OOP (TC 1.B.6) superfamily. OmpA family. As to quaternary structure, monomer and homodimer.

It localises to the cell outer membrane. Functionally, with TolR probably plays a role in maintaining the position of the peptidoglycan cell wall in the periplasm. Acts as a porin with low permeability that allows slow penetration of small solutes; an internal gate slows down solute passage. In Serratia marcescens, this protein is Outer membrane protein A.